We begin with the raw amino-acid sequence, 567 residues long: Urease subunit alpha (567 aa).

Ni(2+) is bound by residues His134, His136, and Lys217. Residue Lys217 is modified to N6-carboxylysine. His219 contacts substrate. Positions 246 and 272 each coordinate Ni(2+). His320 acts as the Proton donor in catalysis. Position 360 (Asp360) interacts with Ni(2+).

Belongs to the metallo-dependent hydrolases superfamily. Urease alpha subunit family. Heterotrimer of UreA (gamma), UreB (beta) and UreC (alpha) subunits. Three heterotrimers associate to form the active enzyme. Requires Ni cation as cofactor. Carboxylation allows a single lysine to coordinate two nickel ions.

Its subcellular location is the cytoplasm. It carries out the reaction urea + 2 H2O + H(+) = hydrogencarbonate + 2 NH4(+). The protein operates within nitrogen metabolism; urea degradation; CO(2) and NH(3) from urea (urease route): step 1/1. The protein is Urease subunit alpha of Pseudomonas putida (strain GB-1).